A 234-amino-acid polypeptide reads, in one-letter code: Putative ankyrin repeat protein RF_0063 (234 aa).

2 ANK repeats span residues 149–180 (NNNTALHYAVDKNLEKLSISLINKMSIETISI) and 184–213 (YNNTALHYATDNGLEVISWFLINNMTQKAL).

The sequence is that of Putative ankyrin repeat protein RF_0063 from Rickettsia felis (strain ATCC VR-1525 / URRWXCal2) (Rickettsia azadi).